The following is a 259-amino-acid chain: 3-deoxy-manno-octulosonate cytidylyltransferase 1 (259 aa).

This sequence belongs to the KdsB family.

Its subcellular location is the cytoplasm. It catalyses the reaction 3-deoxy-alpha-D-manno-oct-2-ulosonate + CTP = CMP-3-deoxy-beta-D-manno-octulosonate + diphosphate. Its pathway is nucleotide-sugar biosynthesis; CMP-3-deoxy-D-manno-octulosonate biosynthesis; CMP-3-deoxy-D-manno-octulosonate from 3-deoxy-D-manno-octulosonate and CTP: step 1/1. The protein operates within bacterial outer membrane biogenesis; lipopolysaccharide biosynthesis. Functionally, activates KDO (a required 8-carbon sugar) for incorporation into bacterial lipopolysaccharide in Gram-negative bacteria. This Hydrogenovibrio crunogenus (strain DSM 25203 / XCL-2) (Thiomicrospira crunogena) protein is 3-deoxy-manno-octulosonate cytidylyltransferase 1.